The chain runs to 53 residues: uncharacterized protein (53 aa).

A helical membrane pass occupies residues 13–35 (FLLHSFTFPIAHCPSFSWASFFF).

The protein localises to the membrane. This is an uncharacterized protein from Saccharomyces cerevisiae (strain ATCC 204508 / S288c) (Baker's yeast).